The primary structure comprises 188 residues: Elongation factor P (188 aa).

Lys34 carries the post-translational modification N6-(3,6-diaminohexanoyl)-5-hydroxylysine.

This sequence belongs to the elongation factor P family. May be beta-lysylated on the epsilon-amino group of Lys-34 by the combined action of EpmA and EpmB, and then hydroxylated on the C5 position of the same residue by EpmC (if this protein is present). Lysylation is critical for the stimulatory effect of EF-P on peptide-bond formation. The lysylation moiety may extend toward the peptidyltransferase center and stabilize the terminal 3-CCA end of the tRNA. Hydroxylation of the C5 position on Lys-34 may allow additional potential stabilizing hydrogen-bond interactions with the P-tRNA.

The protein localises to the cytoplasm. Its pathway is protein biosynthesis; polypeptide chain elongation. In terms of biological role, involved in peptide bond synthesis. Alleviates ribosome stalling that occurs when 3 or more consecutive Pro residues or the sequence PPG is present in a protein, possibly by augmenting the peptidyl transferase activity of the ribosome. Modification of Lys-34 is required for alleviation. This chain is Elongation factor P, found in Erwinia tasmaniensis (strain DSM 17950 / CFBP 7177 / CIP 109463 / NCPPB 4357 / Et1/99).